Consider the following 335-residue polypeptide: Nuclear distribution protein nudE homolog 1 (335 aa).

A self-association region spans residues 1-93; that stretch reads MEDSGKTFSS…VQHSEGYRQI (93 aa). Residues 18–188 are a coiled coil; the sequence is WKDLAMTYKQ…ELAVQQKQEK (171 aa). Positions 88 to 156 are interaction with PAFAH1B1; sequence EGYRQISALE…ERNAFLESEL (69 aa). The interval 167–290 is interaction with CENPF; it reads QRLKDEARDL…QSPNRTGGPA (124 aa). Residues 181–246 are disordered; sequence AVQQKQEKPR…DDSTGGTPLT (66 aa). The segment covering 204-214 has biased composition (polar residues); the sequence is TAVQATGSVPS. Residue S211 is modified to Phosphoserine. Residues T215 and T228 each carry the phosphothreonine modification. S231 and S239 each carry phosphoserine. Residues T243 and T246 each carry the phosphothreonine modification. Residue C274 is the site of S-palmitoyl cysteine; by ZDHHC2, ZDHHC3 and ZDHHC7 attachment. The tract at residues 279 to 335 is disordered; the sequence is YDQSPNRTGGPASGRSSKNRDGGERRPSSTSVPLGDKGLDTSCRWLSKSTTRSSSSC. Position 282 is a phosphoserine (S282). Positions 296–305 are enriched in basic and acidic residues; sequence KNRDGGERRP. Residue S309 is modified to Phosphoserine. The span at 325–335 shows a compositional bias: low complexity; it reads SKSTTRSSSSC.

Belongs to the nudE family. In terms of assembly, homodimer. Interacts with CNTRL, LIS1, dynein, SLMAP and TCP1. Interacts with CENPF, dynactin, tubulin gamma, PAFAH1B1, PCM1 and PCNT. Interacts with ZNF365. Interacts with GTP-bound RAB9A and RAB9B; the interaction leads to RAB9-dynein motor tethering. Interacts (via C-terminus) with MCRS1 (via C-terminus); phosphorylation of NDE1 inhibits the interaction. Phosphorylated in mitosis. Phosphorylated in vitro by CDC2. Phosphorylation at Thr-246 is essential for the G2/M transition. In terms of tissue distribution, expressed in the neuroepithelium throughout the developing brain, including the cerebral cortex and cerebellum.

The protein localises to the cytoplasm. It is found in the cytoskeleton. The protein resides in the microtubule organizing center. Its subcellular location is the centrosome. It localises to the chromosome. The protein localises to the centromere. It is found in the kinetochore. The protein resides in the spindle. Its subcellular location is the cleavage furrow. It localises to the cytoplasmic vesicle membrane. Its function is as follows. Required for centrosome duplication and formation and function of the mitotic spindle. Essential for the development of the cerebral cortex. May regulate the production of neurons by controlling the orientation of the mitotic spindle during division of cortical neuronal progenitors of the proliferative ventricular zone of the brain. Orientation of the division plane perpendicular to the layers of the cortex gives rise to two proliferative neuronal progenitors whereas parallel orientation of the division plane yields one proliferative neuronal progenitor and a postmitotic neuron. A premature shift towards a neuronal fate within the progenitor population may result in an overall reduction in the final number of neurons and an increase in the number of neurons in the deeper layers of the cortex. Acts as a RAB9A/B effector that tethers RAB9-associated late endosomes to the dynein motor for their retrograde transport to the trans-Golgi network. The sequence is that of Nuclear distribution protein nudE homolog 1 from Homo sapiens (Human).